The following is a 102-amino-acid chain: Large ribosomal subunit protein bL21 (102 aa).

The protein belongs to the bacterial ribosomal protein bL21 family. As to quaternary structure, part of the 50S ribosomal subunit. Contacts protein L20.

Its function is as follows. This protein binds to 23S rRNA in the presence of protein L20. The chain is Large ribosomal subunit protein bL21 from Desulfovibrio desulfuricans (strain ATCC 27774 / DSM 6949 / MB).